Reading from the N-terminus, the 157-residue chain is Protein Smg homolog (157 aa).

The protein belongs to the Smg family.

This is Protein Smg homolog from Shewanella loihica (strain ATCC BAA-1088 / PV-4).